Consider the following 294-residue polypeptide: Putative lipid kinase SP_1045 (294 aa).

A DAGKc domain is found at Met-1–Tyr-131. ATP is bound by residues Asn-9 to Gly-13, Thr-40, Gly-66 to Glu-72, and Thr-93. Mg(2+) is bound by residues Asp-212 and Tyr-214. Asp-269 (proton acceptor) is an active-site residue.

This sequence belongs to the diacylglycerol/lipid kinase family. The cofactor is Mg(2+).

In terms of biological role, may catalyze the ATP-dependent phosphorylation of lipids other than diacylglycerol (DAG). In fact, is not able to exhibit diacylglycerol kinase activity in vitro. The chain is Putative lipid kinase SP_1045 from Streptococcus pneumoniae serotype 4 (strain ATCC BAA-334 / TIGR4).